Here is a 227-residue protein sequence, read N- to C-terminus: Probable septum site-determining protein MinC (227 aa).

Belongs to the MinC family. As to quaternary structure, interacts with MinD and FtsZ.

Its function is as follows. Cell division inhibitor that blocks the formation of polar Z ring septums. Rapidly oscillates between the poles of the cell to destabilize FtsZ filaments that have formed before they mature into polar Z rings. Prevents FtsZ polymerization. The protein is Probable septum site-determining protein MinC of Bacillus pumilus (strain SAFR-032).